A 393-amino-acid polypeptide reads, in one-letter code: NAD(P)H-quinone oxidoreductase subunit H, chloroplastic (393 aa).

The protein belongs to the complex I 49 kDa subunit family. As to quaternary structure, NDH is composed of at least 16 different subunits, 5 of which are encoded in the nucleus.

Its subcellular location is the plastid. It is found in the chloroplast thylakoid membrane. It catalyses the reaction a plastoquinone + NADH + (n+1) H(+)(in) = a plastoquinol + NAD(+) + n H(+)(out). The enzyme catalyses a plastoquinone + NADPH + (n+1) H(+)(in) = a plastoquinol + NADP(+) + n H(+)(out). Its function is as follows. NDH shuttles electrons from NAD(P)H:plastoquinone, via FMN and iron-sulfur (Fe-S) centers, to quinones in the photosynthetic chain and possibly in a chloroplast respiratory chain. The immediate electron acceptor for the enzyme in this species is believed to be plastoquinone. Couples the redox reaction to proton translocation, and thus conserves the redox energy in a proton gradient. The chain is NAD(P)H-quinone oxidoreductase subunit H, chloroplastic from Saccharum hybrid (Sugarcane).